A 397-amino-acid chain; its full sequence is Probable N-succinyldiaminopimelate aminotransferase DapC (397 aa).

Pyridoxal 5'-phosphate contacts are provided by residues 109 to 110 (GS) and 218 to 222 (DGMAE). K232 is modified (N6-(pyridoxal phosphate)lysine).

The protein belongs to the class-III pyridoxal-phosphate-dependent aminotransferase family. As to quaternary structure, homodimer. Pyridoxal 5'-phosphate is required as a cofactor.

The protein resides in the cytoplasm. It carries out the reaction N-succinyl-(2S,6S)-2,6-diaminopimelate + 2-oxoglutarate = (S)-2-succinylamino-6-oxoheptanedioate + L-glutamate. It participates in amino-acid biosynthesis; L-lysine biosynthesis via DAP pathway; LL-2,6-diaminopimelate from (S)-tetrahydrodipicolinate (succinylase route): step 2/3. Its function is as follows. Involved in the lysine biosynthetic pathways. It catalyzes the transfer of an amino group from L-glutamate to N-succinyl-2-l-amino-6-oxoheptanedioate (N-succinyl-2-l-amino-6-ketopimelate) in a PLP-dependent reaction, yielding as products N-succinyl-l-2,6-diaminoheptanedioate (N-succinyl-diaminopimelate) and 2-oxoglutarate. The protein is Probable N-succinyldiaminopimelate aminotransferase DapC (dapC) of Mycobacterium tuberculosis (strain CDC 1551 / Oshkosh).